Here is a 313-residue protein sequence, read N- to C-terminus: Porphobilinogen deaminase (313 aa).

S-(dipyrrolylmethanemethyl)cysteine is present on Cys240.

Belongs to the HMBS family. In terms of assembly, monomer. Requires dipyrromethane as cofactor.

The enzyme catalyses 4 porphobilinogen + H2O = hydroxymethylbilane + 4 NH4(+). It functions in the pathway porphyrin-containing compound metabolism; protoporphyrin-IX biosynthesis; coproporphyrinogen-III from 5-aminolevulinate: step 2/4. In terms of biological role, tetrapolymerization of the monopyrrole PBG into the hydroxymethylbilane pre-uroporphyrinogen in several discrete steps. This Moorella thermoacetica (strain ATCC 39073 / JCM 9320) protein is Porphobilinogen deaminase.